Consider the following 524-residue polypeptide: Glucose-6-phosphate 1-dehydrogenase (524 aa).

S20 is modified (phosphoserine). NADP(+) is bound by residues 42-49, R76, and K175; that span reads GASGDLAK. D-glucose 6-phosphate is bound by residues K175, 205 to 209, E243, and D262; that span reads HYLGK. Residue H267 is the Proton acceptor of the active site. R362 contributes to the NADP(+) binding site. 2 residues coordinate D-glucose 6-phosphate: K365 and R370. K371, R375, and R398 together coordinate NADP(+). Q400 contributes to the D-glucose 6-phosphate binding site. Residues 406–408, 426–428, R492, Y508, and W514 each bind NADP(+); these read YFK and DLT.

The protein belongs to the glucose-6-phosphate dehydrogenase family.

Its subcellular location is the cytoplasm. It localises to the cytosol. It catalyses the reaction D-glucose 6-phosphate + NADP(+) = 6-phospho-D-glucono-1,5-lactone + NADPH + H(+). It participates in carbohydrate degradation; pentose phosphate pathway; D-ribulose 5-phosphate from D-glucose 6-phosphate (oxidative stage): step 1/3. Its function is as follows. Cytosolic glucose-6-phosphate dehydrogenase that catalyzes the first and rate-limiting step of the oxidative branch within the pentose phosphate pathway/shunt, an alternative route to glycolysis for the dissimilation of carbohydrates and a major source of reducing power and metabolic intermediates for fatty acid and nucleic acid biosynthetic processes. This is Glucose-6-phosphate 1-dehydrogenase from Drosophila melanogaster (Fruit fly).